Reading from the N-terminus, the 228-residue chain is 3,4-dihydroxy-2-butanone 4-phosphate synthase (228 aa).

Residues 37 to 38, D42, 150 to 154, and E174 each bind D-ribulose 5-phosphate; these read RE and RPGHT. E38 provides a ligand contact to Mg(2+). H153 is a Mg(2+) binding site.

Belongs to the DHBP synthase family. In terms of assembly, homodimer. Requires Mg(2+) as cofactor. Mn(2+) is required as a cofactor.

It carries out the reaction D-ribulose 5-phosphate = (2S)-2-hydroxy-3-oxobutyl phosphate + formate + H(+). Its pathway is cofactor biosynthesis; riboflavin biosynthesis; 2-hydroxy-3-oxobutyl phosphate from D-ribulose 5-phosphate: step 1/1. In terms of biological role, catalyzes the conversion of D-ribulose 5-phosphate to formate and 3,4-dihydroxy-2-butanone 4-phosphate. The sequence is that of 3,4-dihydroxy-2-butanone 4-phosphate synthase from Chloroherpeton thalassium (strain ATCC 35110 / GB-78).